The chain runs to 1938 residues: Myosin heavy chain, striated muscle (1938 aa).

Residues 29-79 (DGKKNCWVPDEKEGFASAEIQSSKGDEITVKIVADSSTRTVKKDDIQSMNP) enclose the Myosin N-terminal SH3-like domain. A Myosin motor domain is found at 83–775 (EKLEDMANMT…VLGNLEEMRD (693 aa)). 176–183 (GESGAGKT) contacts ATP. The segment at 653–675 (LNKLMKNLYSTHPHFVRCIIPNE) is actin-binding. An IQ domain is found at 778–805 (LSKIISMFQAHIRGYLIRKAYKKLQDQR). The interval 836 to 1938 (LLSIARQEEE…RSSVSVSASN (1103 aa)) is rodlike tail (S2 and LMM domains). The stretch at 836–1938 (LLSIARQEEE…RSSVSVSASN (1103 aa)) forms a coiled coil. Composition is skewed to basic and acidic residues over residues 1041–1058 (VRGD…DLKS) and 1212–1225 (SKLE…KREM). Disordered stretches follow at residues 1041 to 1062 (VRGD…TQEN), 1187 to 1332 (SALR…EVRN), 1344 to 1363 (LEEE…KANN), and 1898 to 1938 (HELE…SASN). The span at 1265-1285 (RSINELQSQKSRLQAENSDLT) shows a compositional bias: polar residues. Composition is skewed to basic and acidic residues over residues 1286-1303 (RQLE…KEKS), 1310-1332 (EDAR…EVRN), and 1344-1354 (LEEEQESKSDV). Positions 1922-1938 (RSSVSVQRSSVSVSASN) are enriched in low complexity.

It belongs to the TRAFAC class myosin-kinesin ATPase superfamily. Myosin family. As to quaternary structure, muscle myosin is a hexameric protein that consists of 2 heavy chain subunits (MHC), 2 alkali light chain subunits (MLC) and 2 regulatory light chain subunits (MLC-2).

It is found in the cytoplasm. Its subcellular location is the myofibril. Its function is as follows. Muscle contraction. Myosin is a protein that binds to F-actin and has ATPase activity that is activated by F-actin. This Argopecten irradians (Bay scallop) protein is Myosin heavy chain, striated muscle.